The following is a 114-amino-acid chain: Non-specific lipid-transfer protein 1 (114 aa).

The signal sequence occupies residues 1 to 23 (MEMVSKIACFVLLCMVVVAPHAE). 4 disulfide bridges follow: cysteine 27–cysteine 73, cysteine 37–cysteine 50, cysteine 51–cysteine 96, and cysteine 71–cysteine 110.

Belongs to the plant LTP family.

Its function is as follows. Plant non-specific lipid-transfer proteins transfer phospholipids as well as galactolipids across membranes. May play a role in wax or cutin deposition in the cell walls of expanding epidermal cells and certain secretory tissues. The sequence is that of Non-specific lipid-transfer protein 1 (TSW12) from Solanum lycopersicum (Tomato).